The chain runs to 103 residues: Putative inactive recombination-promoting nuclease-like protein YjiP (103 aa).

It belongs to the Rpn/YhgA-like nuclease family.

In terms of biological role, this pseudogene is the N-terminal fragment of low activity DNA endonuclease RpnD which probably yields 3'-hydroxyl ends. The intact protein can be seen in this entry (AC B7NGZ6). Expression of the repaired protein increases the frequency of recA-independent recombination, but also decreases viability probably via DNA damage; in a RecA strain expression has no effect on viability but does induce the SOS repair response. May play a role in horizontal gene transfer. The polypeptide is Putative inactive recombination-promoting nuclease-like protein YjiP (yjiP) (Escherichia coli (strain K12)).